Consider the following 374-residue polypeptide: Anhydro-N-acetylmuramic acid kinase (374 aa).

An ATP-binding site is contributed by 12 to 19 (GTSLDGID).

This sequence belongs to the anhydro-N-acetylmuramic acid kinase family.

The enzyme catalyses 1,6-anhydro-N-acetyl-beta-muramate + ATP + H2O = N-acetyl-D-muramate 6-phosphate + ADP + H(+). It functions in the pathway amino-sugar metabolism; 1,6-anhydro-N-acetylmuramate degradation. The protein operates within cell wall biogenesis; peptidoglycan recycling. In terms of biological role, catalyzes the specific phosphorylation of 1,6-anhydro-N-acetylmuramic acid (anhMurNAc) with the simultaneous cleavage of the 1,6-anhydro ring, generating MurNAc-6-P. Is required for the utilization of anhMurNAc either imported from the medium or derived from its own cell wall murein, and thus plays a role in cell wall recycling. This is Anhydro-N-acetylmuramic acid kinase from Klebsiella pneumoniae subsp. pneumoniae (strain ATCC 700721 / MGH 78578).